The primary structure comprises 312 residues: Ribosomal protein L11 methyltransferase (312 aa).

Residues Thr163, Gly184, Asp206, and Asn248 each contribute to the S-adenosyl-L-methionine site.

Belongs to the methyltransferase superfamily. PrmA family.

It localises to the cytoplasm. It catalyses the reaction L-lysyl-[protein] + 3 S-adenosyl-L-methionine = N(6),N(6),N(6)-trimethyl-L-lysyl-[protein] + 3 S-adenosyl-L-homocysteine + 3 H(+). Functionally, methylates ribosomal protein L11. The protein is Ribosomal protein L11 methyltransferase of Clostridium kluyveri (strain NBRC 12016).